The sequence spans 629 residues: Phosphomethylpyrimidine synthase (629 aa).

Residues 1 to 21 (MSIKAKNAAHLRESAQVDSGS) are disordered. Substrate contacts are provided by residues N233, M262, Y291, H327, 347 to 349 (SRG), 388 to 391 (DGLR), and E427. H431 serves as a coordination point for Zn(2+). Y454 serves as a coordination point for substrate. H495 contributes to the Zn(2+) binding site. 3 residues coordinate [4Fe-4S] cluster: C575, C578, and C583.

Belongs to the ThiC family. In terms of assembly, homodimer. [4Fe-4S] cluster serves as cofactor.

It carries out the reaction 5-amino-1-(5-phospho-beta-D-ribosyl)imidazole + S-adenosyl-L-methionine = 4-amino-2-methyl-5-(phosphooxymethyl)pyrimidine + CO + 5'-deoxyadenosine + formate + L-methionine + 3 H(+). The protein operates within cofactor biosynthesis; thiamine diphosphate biosynthesis. In terms of biological role, catalyzes the synthesis of the hydroxymethylpyrimidine phosphate (HMP-P) moiety of thiamine from aminoimidazole ribotide (AIR) in a radical S-adenosyl-L-methionine (SAM)-dependent reaction. The chain is Phosphomethylpyrimidine synthase from Pseudomonas syringae pv. syringae (strain B728a).